Here is a 315-residue protein sequence, read N- to C-terminus: Homoserine O-succinyltransferase (315 aa).

C142 (acyl-thioester intermediate) is an active-site residue. The substrate site is built by K163 and S192. The Proton acceptor role is filled by H235. Residue E237 is part of the active site. R249 provides a ligand contact to substrate.

The protein belongs to the MetA family.

It localises to the cytoplasm. It carries out the reaction L-homoserine + succinyl-CoA = O-succinyl-L-homoserine + CoA. It participates in amino-acid biosynthesis; L-methionine biosynthesis via de novo pathway; O-succinyl-L-homoserine from L-homoserine: step 1/1. Transfers a succinyl group from succinyl-CoA to L-homoserine, forming succinyl-L-homoserine. This Shewanella piezotolerans (strain WP3 / JCM 13877) protein is Homoserine O-succinyltransferase.